The primary structure comprises 689 residues: MADNLVIVESPAKAKTIEKYLGKKYKVIASMGHVRDLPRSQMGVDTEDNYEPKYITIRGKGPVVKELKKHAKKAKNVFLASDPDREGEAIAWHLSKILELEDSKENRVVFNEITKDAVKESFKNPREIEMNLVDAQQARRILDRLVGYNISPVLWKKVKKGLSAGRVQSVALRLVIDRENEIRNFKPEEYWTIEGEFRYKKSKFNAKFLHYKNKPFKLKTKKDVEKITAALDGDQFEITNVTKKEKTRNPANPFTTSTLQQEAARKLNFKARKTMMVAQQLYEGIDLKKQGTIGLITYMRTDSTRISDTAKAEAKQYITDKYGESYTSKRKASGKQGDQDAHEAIRPSSTMRTPDDMKSFLTKDQYRLYKLIWERFVASQMAPAILDTVSLDITQGDIKFRANGQTIKFKGFMTLYVETKDDSDSEKENKLPKLEQGDKVTATQIEPAQHYTQPPPRYTEARLVKTLEELKIGRPSTYAPTIDTIQKRNYVKLESKRFVPTELGEIVHEQVKEYFPEIIDVEFTVNMETLLDKIAEGDITWRKVIDGFFSSFKQDVERAEEEMEKIEIKDEPAGEDCEVCGSPMVIKMGRYGKFMACSNFPDCRNTKAIVKSIGVKCPKCNDGDVVERKSKKNRVFYGCSKYPECDFISWDKPIGRDCPKCNQYLVENKKGKTTQVICSNCDYKEAAQK.

In terms of domain architecture, Toprim spans 3–113 (DNLVIVESPA…KENRVVFNEI (111 aa)). Mg(2+) contacts are provided by Glu-9 and Asp-82. The 429-residue stretch at 129-557 (EMNLVDAQQA…FFSSFKQDVE (429 aa)) folds into the Topo IA-type catalytic domain. An interaction with DNA region spans residues 163–168 (SAGRVQ). The active-site O-(5'-phospho-DNA)-tyrosine intermediate is the Tyr-298. The interval 328–357 (SKRKASGKQGDQDAHEAIRPSSTMRTPDDM) is disordered. 3 C4-type zinc fingers span residues 577-603 (CEVC…FPDC), 617-645 (CPKC…YPEC), and 658-681 (CPKC…CSNC).

Belongs to the type IA topoisomerase family. In terms of assembly, monomer. Mg(2+) serves as cofactor.

It carries out the reaction ATP-independent breakage of single-stranded DNA, followed by passage and rejoining.. Its function is as follows. Releases the supercoiling and torsional tension of DNA, which is introduced during the DNA replication and transcription, by transiently cleaving and rejoining one strand of the DNA duplex. Introduces a single-strand break via transesterification at a target site in duplex DNA. The scissile phosphodiester is attacked by the catalytic tyrosine of the enzyme, resulting in the formation of a DNA-(5'-phosphotyrosyl)-enzyme intermediate and the expulsion of a 3'-OH DNA strand. The free DNA strand then undergoes passage around the unbroken strand, thus removing DNA supercoils. Finally, in the religation step, the DNA 3'-OH attacks the covalent intermediate to expel the active-site tyrosine and restore the DNA phosphodiester backbone. The chain is DNA topoisomerase 1 from Staphylococcus aureus (strain N315).